Consider the following 90-residue polypeptide: UPF0223 protein SH1855 (90 aa).

The protein belongs to the UPF0223 family.

This chain is UPF0223 protein SH1855, found in Staphylococcus haemolyticus (strain JCSC1435).